A 285-amino-acid chain; its full sequence is Ribosomal RNA small subunit methyltransferase I (285 aa).

This sequence belongs to the methyltransferase superfamily. RsmI family.

The protein localises to the cytoplasm. The catalysed reaction is cytidine(1402) in 16S rRNA + S-adenosyl-L-methionine = 2'-O-methylcytidine(1402) in 16S rRNA + S-adenosyl-L-homocysteine + H(+). Its function is as follows. Catalyzes the 2'-O-methylation of the ribose of cytidine 1402 (C1402) in 16S rRNA. In Mycobacterium tuberculosis (strain ATCC 25618 / H37Rv), this protein is Ribosomal RNA small subunit methyltransferase I.